A 117-amino-acid polypeptide reads, in one-letter code: Phosphoribosyl-ATP pyrophosphatase (117 aa).

Belongs to the PRA-PH family.

It is found in the cytoplasm. It catalyses the reaction 1-(5-phospho-beta-D-ribosyl)-ATP + H2O = 1-(5-phospho-beta-D-ribosyl)-5'-AMP + diphosphate + H(+). Its pathway is amino-acid biosynthesis; L-histidine biosynthesis; L-histidine from 5-phospho-alpha-D-ribose 1-diphosphate: step 2/9. The polypeptide is Phosphoribosyl-ATP pyrophosphatase (Rhodospirillum rubrum (strain ATCC 11170 / ATH 1.1.1 / DSM 467 / LMG 4362 / NCIMB 8255 / S1)).